Consider the following 155-residue polypeptide: Small ribosomal subunit protein uS7 (155 aa).

This sequence belongs to the universal ribosomal protein uS7 family. As to quaternary structure, part of the 30S ribosomal subunit. Contacts proteins S9 and S11.

Functionally, one of the primary rRNA binding proteins, it binds directly to 16S rRNA where it nucleates assembly of the head domain of the 30S subunit. Is located at the subunit interface close to the decoding center, probably blocks exit of the E-site tRNA. This Malacoplasma penetrans (strain HF-2) (Mycoplasma penetrans) protein is Small ribosomal subunit protein uS7.